Here is a 126-residue protein sequence, read N- to C-terminus: Pancreatic polypeptide prohormone (126 aa).

The first 26 residues, 1–26, serve as a signal peptide directing secretion; the sequence is MTATRCCLWLLLLGTCMALLLPEAWG. Tyrosine amide is present on Y62. Residues 77–126 are disordered; it reads RQSHAAAPGGSHRHPPAGLPAAKGGTGVSGSPPKPWDCLPCRAHSLPSQS.

It belongs to the NPY family. Post-translationally, no icosapeptide-like peptide is cleaved from the C-terminal.

The protein resides in the secreted. In terms of biological role, hormone secreted by pancreatic cells that acts as a regulator of pancreatic and gastrointestinal functions probably by signaling through the G protein-coupled receptor NPY4R2. This is Pancreatic polypeptide prohormone (PPY) from Cavia porcellus (Guinea pig).